Here is a 201-residue protein sequence, read N- to C-terminus: UPF0177 protein YajF (201 aa).

Transmembrane regions (helical) follow at residues 10–30 (TVILALFLLFLSQVPLYYVEY), 44–64 (ITVNFILIGLLIILIAIMLGI), 82–102 (ILILILIIPSVALDILFSQFI), 119–139 (VMGSLLWFGKILGVALLAPIL), and 159–179 (FVFSSLLFTFMHSGYSWVFLI).

It belongs to the UPF0177 family.

The protein localises to the cell membrane. This Lactococcus lactis subsp. lactis (strain IL1403) (Streptococcus lactis) protein is UPF0177 protein YajF (yajF).